The chain runs to 129 residues: Prefoldin subunit alpha (129 aa).

This sequence belongs to the prefoldin alpha subunit family. In terms of assembly, heterohexamer of two alpha and four beta subunits.

It is found in the cytoplasm. Functionally, molecular chaperone capable of stabilizing a range of proteins. Seems to fulfill an ATP-independent, HSP70-like function in archaeal de novo protein folding. This chain is Prefoldin subunit alpha, found in Thermofilum pendens (strain DSM 2475 / Hrk 5).